Consider the following 562-residue polypeptide: Bacillolysin (562 aa).

The first 24 residues, 1–24, serve as a signal peptide directing secretion; the sequence is MKKKKQALKVLLSVGILSSSFAFA. A propeptide spans 25–245 (activation peptide); the sequence is HTSSAAPNNV…KQAAKPAAKP (221 aa). Asp-303, Asp-305, and Asp-384 together coordinate Ca(2+). His-388 is a binding site for Zn(2+). The active site involves Glu-389. The Zn(2+) site is built by His-392 and Glu-412. Residues Glu-423, Asn-429, Asp-431, Glu-433, Glu-436, Tyr-439, Thr-440, and Asp-446 each contribute to the Ca(2+) site. His-477 functions as the Proton donor in the catalytic mechanism.

This sequence belongs to the peptidase M4 family. Requires Ca(2+) as cofactor. Zn(2+) serves as cofactor.

Its subcellular location is the secreted. The enzyme catalyses Similar, but not identical, to that of thermolysin.. Functionally, extracellular zinc metalloprotease. The polypeptide is Bacillolysin (nprM) (Priestia megaterium (strain DSM 319 / IMG 1521) (Bacillus megaterium)).